A 301-amino-acid chain; its full sequence is Phosphatidylcholine:diacylglycerol cholinephosphotransferase 1 (301 aa).

Residues 1–39 (MSAAAAETDVSLRRRSNSLNGNHTNGVAIDGTLDNNNRR) form a disordered region. 5 helical membrane-spanning segments follow: residues 88-108 (HWIPCMFAAGLLFFMGVEYTL), 141-161 (VLAALNTVFVGMQTTYIVWTW), 171-191 (IAALFMFTCRGILGYSTQLPL), 202-222 (FPVGNVSFFLFFSGHVAGSMI), and 255-275 (GHYTIDLAVGVGAGILFDSLA). Residues H216, H256, and D260 contribute to the active site.

It belongs to the phosphatidylcholine:diacylglycerol cholinephosphotransferase family.

It is found in the membrane. It catalyses the reaction 1,2-ditetradecanoyl-sn-glycero-3-phosphocholine + 1,2-di-(9Z-octadecenoyl)-sn-glycerol = 1,2-ditetradecanoyl-sn-glycerol + 1,2-di-(9Z-octadecenoyl)-sn-glycero-3-phosphocholine. Functions as a phosphatidylcholine:diacylglycerol cholinephosphotransferase that catalyzes the transfer of the phosphocholine headgroup from phosphatidylcholine (PC) to diacylglycerol, a major reaction for the transfer of 18:1 into phosphatidylcholine for desaturation and also for the reverse transfer of 18:2 and 18:3 into the triacylglycerols synthesis pathway. This Arabidopsis thaliana (Mouse-ear cress) protein is Phosphatidylcholine:diacylglycerol cholinephosphotransferase 1.